Here is a 427-residue protein sequence, read N- to C-terminus: Adenylosuccinate synthetase (427 aa).

GTP is bound by residues 12-18 and 40-42; these read GDEGKGK and GHT. Residue aspartate 13 is the Proton acceptor of the active site. Residues aspartate 13 and glycine 40 each coordinate Mg(2+). IMP-binding positions include 13 to 16, 38 to 41, threonine 128, arginine 142, glutamine 223, threonine 238, and arginine 302; these read DEGK and NAGH. Catalysis depends on histidine 41, which acts as the Proton donor. 298-304 provides a ligand contact to substrate; the sequence is VTTGRDR. GTP contacts are provided by residues arginine 304, 330-332, and 412-414; these read KLD and GVG.

It belongs to the adenylosuccinate synthetase family. Homodimer. Mg(2+) is required as a cofactor.

The protein localises to the cytoplasm. The catalysed reaction is IMP + L-aspartate + GTP = N(6)-(1,2-dicarboxyethyl)-AMP + GDP + phosphate + 2 H(+). It participates in purine metabolism; AMP biosynthesis via de novo pathway; AMP from IMP: step 1/2. Functionally, plays an important role in the de novo pathway of purine nucleotide biosynthesis. Catalyzes the first committed step in the biosynthesis of AMP from IMP. The chain is Adenylosuccinate synthetase from Streptomyces coelicolor (strain ATCC BAA-471 / A3(2) / M145).